The primary structure comprises 693 residues: Polyribonucleotide nucleotidyltransferase (693 aa).

Mg(2+) contacts are provided by aspartate 489 and aspartate 495. The KH domain occupies 556–615; the sequence is PQIHVMNINPAKIKDVVGRGGATVKGIVEKTGAQIDTSDSGEVKVFAKDKKSMDMAVAMI. The region spanning 625–693 is the S1 motif domain; the sequence is GQVYKGKIVK…GRVKLSLVAR (69 aa).

This sequence belongs to the polyribonucleotide nucleotidyltransferase family. Component of the RNA degradosome, which is a multiprotein complex involved in RNA processing and mRNA degradation. The cofactor is Mg(2+).

It localises to the cytoplasm. It carries out the reaction RNA(n+1) + phosphate = RNA(n) + a ribonucleoside 5'-diphosphate. Functionally, involved in mRNA degradation. Catalyzes the phosphorolysis of single-stranded polyribonucleotides processively in the 3'- to 5'-direction. In Francisella tularensis subsp. holarctica (strain OSU18), this protein is Polyribonucleotide nucleotidyltransferase.